Here is a 544-residue protein sequence, read N- to C-terminus: Putative ankyrin repeat protein L289 (544 aa).

ANK repeat units follow at residues 31–71, 72–105, 110–143, 147–181, 185–218, 222–255, 259–297, 300–339, 340–374, 378–413, and 414–447; these read KNFS…AQNE, HGWTALMIASILSNDWSSIKTVKLLLKKGADPNI, YSQTVLKLAASNVKYASNIKTIKLLIHYGADINH, LGVSVLHYCYIDYYTKSDNLEVIKLLLSYGMDINS, QGNTLLYIVSKVSQNNNSTETVKFLLENNADPNI, KGTTALMVASKYSNSTSNLATVKLLLDYEANINF, YNETALSKVVSNFYESNYNKNNFMTLKFLIQKGAIDIPI, DKLSILMVAVIRTYCSENSDNFTKLIELLLKHFNPNIQCS, NGKTVLHYLCNKQVCNFPYVDVINLLLKAGINPNI, QGKTALILACDNYCFLKNKEAVRLLCKVSTINTIDN, and TGQSALDYFLNKYKEKYTNILTIILKYGAYCVNK.

The sequence is that of Putative ankyrin repeat protein L289 from Acanthamoeba polyphaga mimivirus (APMV).